The following is a 463-amino-acid chain: 23S rRNA (uracil(1939)-C(5))-methyltransferase RlmD (463 aa).

Positions 14 to 78 (AVAPGSDPVV…PSYEQAHLLE (65 aa)) constitute a TRAM domain. Residues Cys-91, Cys-97, Cys-100, and Cys-179 each contribute to the [4Fe-4S] cluster site. Residues Gln-287, Phe-316, Asn-321, Glu-337, Asn-365, and Asp-386 each coordinate S-adenosyl-L-methionine. Residue Cys-419 is the Nucleophile of the active site.

The protein belongs to the class I-like SAM-binding methyltransferase superfamily. RNA M5U methyltransferase family. RlmD subfamily.

The enzyme catalyses uridine(1939) in 23S rRNA + S-adenosyl-L-methionine = 5-methyluridine(1939) in 23S rRNA + S-adenosyl-L-homocysteine + H(+). Its function is as follows. Catalyzes the formation of 5-methyl-uridine at position 1939 (m5U1939) in 23S rRNA. This is 23S rRNA (uracil(1939)-C(5))-methyltransferase RlmD from Cupriavidus pinatubonensis (strain JMP 134 / LMG 1197) (Cupriavidus necator (strain JMP 134)).